The primary structure comprises 179 residues: Ribosome maturation factor RimM (179 aa).

Residues 103–176 (EPDTYYDHQL…IVEIDPPKGL (74 aa)) form the PRC barrel domain.

This sequence belongs to the RimM family. As to quaternary structure, binds ribosomal protein uS19.

It localises to the cytoplasm. Its function is as follows. An accessory protein needed during the final step in the assembly of 30S ribosomal subunit, possibly for assembly of the head region. Essential for efficient processing of 16S rRNA. May be needed both before and after RbfA during the maturation of 16S rRNA. It has affinity for free ribosomal 30S subunits but not for 70S ribosomes. This Mycobacterium leprae (strain Br4923) protein is Ribosome maturation factor RimM.